A 133-amino-acid polypeptide reads, in one-letter code: UPF0344 protein SH1980 (133 aa).

Transmembrane regions (helical) follow at residues 1-21 (MLHM…IAFL), 42-62 (VFML…FMAA), 71-91 (MLLT…EVSI), and 103-123 (LFWA…ILPW).

The protein belongs to the UPF0344 family.

It is found in the cell membrane. The polypeptide is UPF0344 protein SH1980 (Staphylococcus haemolyticus (strain JCSC1435)).